The following is a 428-amino-acid chain: Adenylosuccinate synthetase (428 aa).

GTP contacts are provided by residues 12 to 18 (GDEGKGK) and 40 to 42 (GHT). The active-site Proton acceptor is Asp-13. Asp-13 and Gly-40 together coordinate Mg(2+). IMP contacts are provided by residues 13–16 (DEGK), 38–41 (NAGH), Thr-128, Arg-142, Gln-223, Thr-238, and Arg-302. Residue His-41 is the Proton donor of the active site. Residue 298–304 (TTTGRPR) coordinates substrate. Residues Arg-304, 330-332 (SID), and 412-414 (SVG) each bind GTP.

Belongs to the adenylosuccinate synthetase family. Homodimer. The cofactor is Mg(2+).

It is found in the cytoplasm. It catalyses the reaction IMP + L-aspartate + GTP = N(6)-(1,2-dicarboxyethyl)-AMP + GDP + phosphate + 2 H(+). Its pathway is purine metabolism; AMP biosynthesis via de novo pathway; AMP from IMP: step 1/2. Its function is as follows. Plays an important role in the de novo pathway of purine nucleotide biosynthesis. Catalyzes the first committed step in the biosynthesis of AMP from IMP. This is Adenylosuccinate synthetase from Geobacillus sp. (strain WCH70).